A 1487-amino-acid chain; its full sequence is Murinoglobulin-1 (1487 aa).

An N-terminal signal peptide occupies residues 1–24; it reads MKKNREAQLCLFSALLAFLPFASL. An intrachain disulfide couples cysteine 48 to cysteine 86. Residues asparagine 55 and asparagine 247 are each glycosylated (N-linked (GlcNAc...) asparagine). Cystine bridges form between cysteine 251–cysteine 283 and cysteine 269–cysteine 295. Residues asparagine 301, asparagine 321, asparagine 393, and asparagine 508 are each glycosylated (N-linked (GlcNAc...) asparagine). 3 disulfides stabilise this stretch: cysteine 468–cysteine 563, cysteine 595–cysteine 784, and cysteine 643–cysteine 689. Residues 686 to 745 form a bait region region; that stretch reads PTYCYEMNMVVLSAPAVESELSPRGGEFEMMPLGVNKSPLPKEPPRKDPPPKDPVIETIR. N-linked (GlcNAc...) asparagine glycans are attached at residues asparagine 760, asparagine 787, and asparagine 882. 4 cysteine pairs are disulfide-bonded: cysteine 860-cysteine 896, cysteine 934-cysteine 1334, cysteine 1092-cysteine 1140, and cysteine 1365-cysteine 1480. Residues 985-988 constitute a cross-link (isoglutamyl cysteine thioester (Cys-Gln)); it reads CGEQ. Asparagine 1004 carries N-linked (GlcNAc...) asparagine glycosylation. Residues asparagine 1153, asparagine 1324, and asparagine 1437 are each glycosylated (N-linked (GlcNAc...) asparagine).

It belongs to the protease inhibitor I39 (alpha-2-macroglobulin) family. In terms of assembly, monomer. Plasma.

It localises to the secreted. Its function is as follows. A proteinase activates the inhibitor by specific proteolysis in the bait region, which, by an unknown mechanism leads to reaction at the cysteinyl-glutamyl internal thiol ester site and to a conformational change, whereby the proteinase is trapped and/or covalently bound to the inhibitor. While in the tetrameric proteinase inhibitors steric inhibition is sufficiently strong, monomeric forms need a covalent linkage between the activated glutamyl residue of the original thiol ester and a terminal amino group of a lysine or another nucleophilic group on the proteinase, for inhibition to be effective. The sequence is that of Murinoglobulin-1 from Rattus norvegicus (Rat).